A 375-amino-acid polypeptide reads, in one-letter code: MSTTGQVIRCKAAILWKPGAPFSIEEVEVAPPKAKEVRIKVVATGLCGTEMKVLGSKHLDLLYPTILGHEGAGIVESIGEGVSTVKPGDKVITLFLPQCGECTSCLNSEGNFCIQFKQSETQLMSDGTSRFTCKGKSIYHFGNTSTFCEYTVIKEISVAKIDAVAPLEKVCLISCGFSTGFGAAINTAKVTPGSTCAVFGLGGVGSSVVMGCKAAGATRIIGVDVNKEKFKKARELGATECLNPQDLKKPIQEVLFDMTDAGIDFCFEAIGNLDVLAAALASCNESYGVCVVVGLLPASVQLKISGQLFFSGRSLKGSVFGGWKSRQHIPKLVADYMAKKLNLDPLITHTLNLDKINEAVELMKTGKCIRCILLL.

Ser-23 carries the phosphoserine modification. Positions 47, 69, 99, 102, 105, 113, and 175 each coordinate Zn(2+). NAD(+)-binding positions include 200–205, Asp-224, Lys-229, 293–295, and Arg-370; these read GLGGVG and VGL.

This sequence belongs to the zinc-containing alcohol dehydrogenase family. Class-V subfamily. As to quaternary structure, dimer. Zn(2+) serves as cofactor.

It is found in the cytoplasm. It carries out the reaction a primary alcohol + NAD(+) = an aldehyde + NADH + H(+). The enzyme catalyses a secondary alcohol + NAD(+) = a ketone + NADH + H(+). In terms of biological role, alcohol dehydrogenase. Catalyzes the NAD-dependent oxidation of primary alcohols to the corresponding aldehydes. Oxidizes secondary alcohols to the corresponding ketones. This chain is Alcohol dehydrogenase 6 (ADH6), found in Pongo abelii (Sumatran orangutan).